The following is a 515-amino-acid chain: Peroxisomal catalase A (515 aa).

The residue at position 2 (serine 2) is an N-acetylserine. Catalysis depends on residues histidine 70 and asparagine 143. Tyrosine 355 is a heme binding site. Residues serine 513–phenylalanine 515 carry the Microbody targeting signal motif.

The protein belongs to the catalase family. As to quaternary structure, homotetramer. It depends on heme as a cofactor.

The protein resides in the peroxisome matrix. The catalysed reaction is 2 H2O2 = O2 + 2 H2O. Its function is as follows. Catalyzes the degradation of hydrogen peroxide (H(2)O(2)) generated by peroxisomal oxidases to water and oxygen, thereby protecting cells from the toxic effects of hydrogen peroxide. The protein is Peroxisomal catalase A (CTA1) of Saccharomyces cerevisiae (strain ATCC 204508 / S288c) (Baker's yeast).